A 390-amino-acid polypeptide reads, in one-letter code: MPSKSLSNLSVTTGANESGSVPEGWERDFLPASDGTTTELVIRCVIPSLYLLIITVGLLGNIMLVKIFITNSAMRSVPNIFISNLAAGDLLLLLTCVPVDASRYFFDEWMFGKVGCKLIPVIQLTSVGVSVFTLTALSADRYRAIVNPMDMQTSGALLRTCVKAMGIWVVSVLLAVPEAVFSEVARISSLDNSSFTACIPYPQTDELHPKIHSVLIFLVYFLIPLAIISIYYYHIAKTLIKSAHNLPGEYNEHTKKQMETRKRLAKIVLVFVGCFIFCWFPNHILYMYRSFNYNEIDPSLGHMIVTLVARVLSFGNSCVNPFALYLLSESFRRHFNSQLCCGRKSYQERGTSYLLSSSAVRMTSLKSNAKNMVTNSVLLNGHSMKQEMAL.

Residues 1 to 19 are compositionally biased toward polar residues; it reads MPSKSLSNLSVTTGANESG. The disordered stretch occupies residues 1–22; that stretch reads MPSKSLSNLSVTTGANESGSVP. Topologically, residues 1–41 are extracellular; the sequence is MPSKSLSNLSVTTGANESGSVPEGWERDFLPASDGTTTELV. Residues asparagine 8 and asparagine 16 are each glycosylated (N-linked (GlcNAc...) asparagine). A helical membrane pass occupies residues 42–65; sequence IRCVIPSLYLLIITVGLLGNIMLV. Residues 66–79 are Cytoplasmic-facing; sequence KIFITNSAMRSVPN. Residues 80 to 99 traverse the membrane as a helical segment; it reads IFISNLAAGDLLLLLTCVPV. Residues 100 to 117 lie on the Extracellular side of the membrane; it reads DASRYFFDEWMFGKVGCK. Cysteines 116 and 198 form a disulfide. The helical transmembrane segment at 118–139 threads the bilayer; sequence LIPVIQLTSVGVSVFTLTALSA. The Cytoplasmic portion of the chain corresponds to 140 to 156; sequence DRYRAIVNPMDMQTSGA. Residues 157–177 form a helical membrane-spanning segment; that stretch reads LLRTCVKAMGIWVVSVLLAVP. At 178–211 the chain is on the extracellular side; the sequence is EAVFSEVARISSLDNSSFTACIPYPQTDELHPKI. Asparagine 192 is a glycosylation site (N-linked (GlcNAc...) asparagine). The chain crosses the membrane as a helical span at residues 212-235; the sequence is HSVLIFLVYFLIPLAIISIYYYHI. Residues 236-266 are Cytoplasmic-facing; the sequence is AKTLIKSAHNLPGEYNEHTKKQMETRKRLAK. Residues 267–287 form a helical membrane-spanning segment; the sequence is IVLVFVGCFIFCWFPNHILYM. Residues 288–299 lie on the Extracellular side of the membrane; that stretch reads YRSFNYNEIDPS. A helical transmembrane segment spans residues 300–327; the sequence is LGHMIVTLVARVLSFGNSCVNPFALYLL. Over 328–390 the chain is Cytoplasmic; that stretch reads SESFRRHFNS…GHSMKQEMAL (63 aa). The S-palmitoyl cysteine moiety is linked to residue cysteine 341. Phosphoserine is present on serine 352.

It belongs to the G-protein coupled receptor 1 family. Expressed in epididymis (at protein level).

It is found in the cell membrane. In terms of biological role, receptor for neuromedin-B. Contributes to the maintenance of basal sigh rate through signaling in the pre-Botzinger complex, a cluster of several thousand neurons in the ventrolateral medulla responsible for inspiration during respiratory activity. Contributes to the induction of sneezing following exposure to chemical irritants or allergens which causes release of NMB by nasal sensory neurons and activation of NMBR-expressing neurons in the sneeze-evoking region of the brainstem. These in turn activate neurons of the caudal ventral respiratory group, giving rise to the sneezing response. Contributes to induction of acute itch, possibly through its activation on dorsal root ganglion neurons by the NMB peptide. Plays a role in the innate immune response to influenza A virus infection by enhancing interferon alpha expression and reducing expression of IL6. Plays a role in CSF1-induced proliferation of osteoclast precursors by contributing to the positive regulation of the expression of the CSF1 receptor CSF1R. In Homo sapiens (Human), this protein is Neuromedin-B receptor (NMBR).